The primary structure comprises 348 residues: N-formyl peptide receptor 2 (348 aa).

Asn1 is a glycosylation site (N-linked (GlcNAc...) asparagine). At 1–24 the chain is on the extracellular side; that stretch reads NFSTPLSEYEEVSYESAGYTVLQI. The helical transmembrane segment at 25-47 threads the bilayer; it reads LPLVVLGVTFVLGVLGNGLVIWV. The Cytoplasmic portion of the chain corresponds to 48-58; the sequence is AGFRMTRTVTT. Residues 59–80 traverse the membrane as a helical segment; the sequence is ICYLNLALADFSFTATLPFLIV. The Extracellular segment spans residues 81–97; it reads SMAMGEKWPFGWFLCKL. Cys95 and Cys173 are disulfide-bonded. The chain crosses the membrane as a helical span at residues 98 to 118; that stretch reads IHIVVDINLFGSVFLIGFIAL. The Cytoplasmic portion of the chain corresponds to 119–137; it reads DRCICVLHPVWAQNHRTVS. The chain crosses the membrane as a helical span at residues 138 to 159; sequence LAMKVIVGPWILALVLTLPVFL. Residues 160–202 lie on the Extracellular side of the membrane; sequence FLTTVTIPNGDTYCTFNFASWGGTPEKRLKVAITMLTARGIIR. The chain crosses the membrane as a helical span at residues 203 to 223; that stretch reads FVIGFSMPMSIVATCYGLIAA. The Cytoplasmic portion of the chain corresponds to 224–239; it reads KIHKKGMIKSSRPLRV. Residues 240–263 form a helical membrane-spanning segment; it reads LTAVVASFFICWFPFQLVALLSTV. Over 264–283 the chain is Extracellular; it reads WLKEILVDGKYKIINILVNP. Residues 284-303 form a helical membrane-spanning segment; that stretch reads TSSLAFFNSCLNPMLYVFVG. Residues 304–348 lie on the Cytoplasmic side of the membrane; that stretch reads QDFRERLIHSLPTSLERALSEDSAPTNDTAASCASPPAETELQAM. The tract at residues 322-348 is disordered; it reads LSEDSAPTNDTAASCASPPAETELQAM. Polar residues predominate over residues 326-335; that stretch reads SAPTNDTAAS.

The protein belongs to the G-protein coupled receptor 1 family. Interacts with APP; the interaction takes place at the cell surface and the complex is then rapidly internalized.

The protein resides in the cell membrane. Low affinity receptor for N-formyl-methionyl peptides, which are powerful neutrophil chemotactic factors. Binding of FMLP to the receptor causes activation of neutrophils. This response is mediated via a G-protein that activates a phosphatidylinositol-calcium second messenger system. Receptor for the chemokine-like protein FAM19A5, mediating FAM19A5-stimulated macrophage chemotaxis and the inhibitory effect on TNFSF11/RANKL-induced osteoclast differentiation. The sequence is that of N-formyl peptide receptor 2 (FPR2) from Macaca mulatta (Rhesus macaque).